Consider the following 189-residue polypeptide: uncharacterized protein (189 aa).

A run of 3 helical transmembrane segments spans residues 2–22 (LVVV…HHLL), 93–113 (ILFY…YFIL), and 116–136 (FYST…LHTL).

The protein resides in the membrane. This is an uncharacterized protein from Schizosaccharomyces pombe (strain 972 / ATCC 24843) (Fission yeast).